Here is a 331-residue protein sequence, read N- to C-terminus: GTP 3',8-cyclase (331 aa).

Residues 6-234 form the Radical SAM core domain; the sequence is PFNRKIDYLR…PATGKSHDGP (229 aa). Arg15 provides a ligand contact to GTP. [4Fe-4S] cluster contacts are provided by Cys22 and Cys26. S-adenosyl-L-methionine is bound at residue Tyr28. A [4Fe-4S] cluster-binding site is contributed by Cys29. Arg66 is a GTP binding site. Residue Gly70 participates in S-adenosyl-L-methionine binding. Ser97 serves as a coordination point for GTP. Residue Ser121 coordinates S-adenosyl-L-methionine. GTP is bound at residue Lys158. Met192 provides a ligand contact to S-adenosyl-L-methionine. The [4Fe-4S] cluster site is built by Cys258 and Cys261. 263–265 contributes to the GTP binding site; that stretch reads RVR. Cys275 contacts [4Fe-4S] cluster.

The protein belongs to the radical SAM superfamily. MoaA family. As to quaternary structure, monomer and homodimer. Requires [4Fe-4S] cluster as cofactor.

The enzyme catalyses GTP + AH2 + S-adenosyl-L-methionine = (8S)-3',8-cyclo-7,8-dihydroguanosine 5'-triphosphate + 5'-deoxyadenosine + L-methionine + A + H(+). It participates in cofactor biosynthesis; molybdopterin biosynthesis. Functionally, catalyzes the cyclization of GTP to (8S)-3',8-cyclo-7,8-dihydroguanosine 5'-triphosphate. In Hydrogenovibrio crunogenus (strain DSM 25203 / XCL-2) (Thiomicrospira crunogena), this protein is GTP 3',8-cyclase.